Here is a 259-residue protein sequence, read N- to C-terminus: Ras-related protein Rab-34 (259 aa).

The residue at position 1 (Met-1) is an N-acetylmethionine. Residues Ser-62, Val-63, Gly-64, Lys-65, Thr-66, Asp-78, Tyr-81, and Thr-84 each coordinate GTP. Position 66 (Thr-66) interacts with Mg(2+). Positions 71-89 match the Switch 1 motif; it reads RFCKDTFDKNYKATIGVDF. Mg(2+)-binding residues include Thr-84 and Asp-107. Residues 108 to 127 carry the Switch 2 motif; the sequence is TAGQERFKCIASTYYRGAQA. 4 residues coordinate GTP: Gly-110, Lys-167, Asp-169, and Ser-198. Residue Ser-241 is modified to Phosphoserine. S-geranylgeranyl cysteine attachment occurs at residues Cys-257 and Cys-258.

The protein belongs to the small GTPase superfamily. Rab family. As to quaternary structure, interacts with RILP. The GTP-bound form interacts with REP15. It depends on Mg(2+) as a cofactor.

It localises to the cytoplasm. Its subcellular location is the golgi apparatus. It is found in the cytoplasmic vesicle. The protein localises to the phagosome. The protein resides in the phagosome membrane. It localises to the cell projection. Its subcellular location is the cilium. It is found in the cytoskeleton. The protein localises to the microtubule organizing center. The protein resides in the centrosome. It localises to the centriole. The catalysed reaction is GTP + H2O = GDP + phosphate + H(+). Its activity is regulated as follows. Regulated by guanine nucleotide exchange factors (GEFs) which promote the exchange of bound GDP for free GTP. Regulated by GTPase activating proteins (GAPs) which increase the GTP hydrolysis activity. Inhibited by GDP dissociation inhibitors (GDIs). Functionally, the small GTPases Rab are key regulators of intracellular membrane trafficking, from the formation of transport vesicles to their fusion with membranes. Rabs cycle between an inactive GDP-bound form and an active GTP-bound form that is able to recruit to membranes different sets of downstream effectors directly responsible for vesicle formation, movement, tethering and fusion. RAB34 transports protein involved in the redistribution of lysosomes to the peri-Golgi region. Plays a role in the maturation of phagosomes that engulf pathogens, such as S.aureus and M.tuberculosis. Plays a role in the fusion of phagosomes with lysosomes. Required for the early steps of intracellular ciliogenesis, the cilium assembly pathway initiated by trafficking and docking of ciliary vesicles to the centrioles in the cytoplasm, followed by axoneme formation in the cytoplasm. After axoneme elongation, the centrioles migrate close to the cell surface so that ciliary vesicles can fuse with the plasma membrane to expose cilia to the extracellular space. It seems dispensable for ciliogenesis via the extracellular pathway where cilium assembly begins after migration and docking of the centriole to the plasma membrane. Also acts as a positive regulator of hedgehog signaling and regulates ciliary function. The polypeptide is Ras-related protein Rab-34 (Mus musculus (Mouse)).